We begin with the raw amino-acid sequence, 191 residues long: MKQLFLIIGAPGSGKTTDAELIAKNNSETIAHFSTGDLLRAESAKKTERGLLIEKFTSQGELVPLEIVVETILSAIKSSGKGIILIDGYPRSVEQMQALDKELNAQNEVILKSVIEVEVSENTAKERVLGRSRGADDNEKVFHNRMRVFLDPLGEIQNFYKNKKVYKAIDGERSIEEIVGEMQEYILSFGN.

12–17 (GSGKTT) is a binding site for ATP. The segment at 34 to 63 (STGDLLRAESAKKTERGLLIEKFTSQGELV) is NMP. AMP is bound by residues threonine 35, arginine 40, 61-63 (ELV), 88-91 (GYPR), and glutamine 95. The segment at 130 to 136 (GRSRGAD) is LID. Position 131 (arginine 131) interacts with ATP. Arginine 133 and arginine 145 together coordinate AMP. Residue arginine 173 participates in ATP binding.

It belongs to the adenylate kinase family. In terms of assembly, monomer.

It is found in the cytoplasm. The enzyme catalyses AMP + ATP = 2 ADP. It participates in purine metabolism; AMP biosynthesis via salvage pathway; AMP from ADP: step 1/1. In terms of biological role, catalyzes the reversible transfer of the terminal phosphate group between ATP and AMP. Plays an important role in cellular energy homeostasis and in adenine nucleotide metabolism. This is Adenylate kinase from Helicobacter pylori (strain ATCC 700392 / 26695) (Campylobacter pylori).